A 126-amino-acid polypeptide reads, in one-letter code: Small ribosomal subunit protein eS8 (126 aa).

Residues M1–R10 are compositionally biased toward polar residues. Residues M1–T35 form a disordered region.

The protein belongs to the eukaryotic ribosomal protein eS8 family. In terms of assembly, part of the 30S ribosomal subunit.

This is Small ribosomal subunit protein eS8 from Methanosphaera stadtmanae (strain ATCC 43021 / DSM 3091 / JCM 11832 / MCB-3).